The following is a 442-amino-acid chain: Prenyltransferase nscD (442 aa).

Belongs to the tryptophan dimethylallyltransferase family.

It functions in the pathway secondary metabolite biosynthesis. Functionally, prenyltransferase; part of the gene cluster that mediates the biosynthesis of neosartoricin B, a prenylated anthracenone that probably exhibits T-cell antiproliferative activity, suggestive of a physiological role as an immunosuppressive agent. The non-reducing polyketide synthase nscA probably synthesizes and cyclizes the decaketide backbone. The hydrolase nscB then mediates the product release through hydrolysis followed by spontaneous decarboxylation. The prenyltransferase nscD catalyzes the addition of the dimethylallyl group to the aromatic C5. The FAD-dependent monooxygenase nscC is then responsible for the stereospecific hydroxylation at C2. Neosartoricin B can be converted into two additional compounds neosartoricins C and D. Neosartoricin C is a spirocyclic compound that is cyclized through the attack of C3 hydroxyl on C14, followed by dehydration. On the other hand, neosartoricin D is a further cyclized compound in which attack of C2 on C14 in neosartoricin C results in the formation of the acetal-containing dioxabicyclo-octanone ring. Both of these compounds are novel and possibly represent related metabolites of the gene cluster. This chain is Prenyltransferase nscD, found in Trichophyton verrucosum (strain HKI 0517).